Consider the following 602-residue polypeptide: Probable translation initiation factor IF-2 (602 aa).

A tr-type G domain is found at 10-227; sequence LRQPIVVVLG…LLAGLTQNYM (218 aa). Residues 19-26 form a G1 region; that stretch reads GHVDHGKT. Residue 19 to 26 coordinates GTP; the sequence is GHVDHGKT. The interval 44–48 is G2; the sequence is EMTQE. Residues 83 to 86 form a G3 region; the sequence is DTPG. Residues 83–87 and 137–140 contribute to the GTP site; these read DTPGH and NKID. The segment at 137 to 140 is G4; it reads NKID. Residues 205 to 207 are G5; sequence SAK.

The protein belongs to the TRAFAC class translation factor GTPase superfamily. Classic translation factor GTPase family. IF-2 subfamily.

Its function is as follows. Function in general translation initiation by promoting the binding of the formylmethionine-tRNA to ribosomes. Seems to function along with eIF-2. The chain is Probable translation initiation factor IF-2 from Sulfurisphaera tokodaii (strain DSM 16993 / JCM 10545 / NBRC 100140 / 7) (Sulfolobus tokodaii).